A 234-amino-acid chain; its full sequence is Sugar fermentation stimulation protein A (234 aa).

A DNA-binding region (H-T-H motif) is located at residues 201–220 (LLSEAQNKGVEVLAYKAELS).

It belongs to the SfsA family.

Its function is as follows. Binds to DNA non-specifically. Could be a regulatory factor involved in maltose metabolism. The sequence is that of Sugar fermentation stimulation protein A from Salmonella typhi.